Here is a 224-residue protein sequence, read N- to C-terminus: Urease accessory protein UreF (224 aa).

This sequence belongs to the UreF family. As to quaternary structure, ureD, UreF and UreG form a complex that acts as a GTP-hydrolysis-dependent molecular chaperone, activating the urease apoprotein by helping to assemble the nickel containing metallocenter of UreC. The UreE protein probably delivers the nickel.

The protein localises to the cytoplasm. Its function is as follows. Required for maturation of urease via the functional incorporation of the urease nickel metallocenter. The polypeptide is Urease accessory protein UreF (Pseudomonas putida (strain ATCC 47054 / DSM 6125 / CFBP 8728 / NCIMB 11950 / KT2440)).